The primary structure comprises 226 residues: Molybdenum transport system permease protein ModB (226 aa).

Residues 11-217 (IRLTLELASL…SFLVLFALYS (207 aa)) form the ABC transmembrane type-1 domain. Helical transmembrane passes span 17–37 (LASLTTVLLLVVGTPIAWWLA), 47–67 (IGAVVALPLVLPPTVLGFYLL), 88–108 (LPFTFAGLVVASVFYSLPFVV), 150–170 (ITAAILGFAHTVGEFGVVLMI), and 197–217 (AHWLAGGMVLFSFLVLFALYS).

Belongs to the binding-protein-dependent transport system permease family. CysTW subfamily.

It localises to the cell inner membrane. Part of the binding-protein-dependent transport system for molybdenum; probably responsible for the translocation of the substrate across the membrane. The protein is Molybdenum transport system permease protein ModB (modB) of Azotobacter vinelandii.